The primary structure comprises 258 residues: Putative ankyrin repeat domain-containing protein 30B-like (258 aa).

Positions 1-21 (MERLSAAPVKGQTGPERPSPF) are disordered. ANK repeat units follow at residues 71-100 (KKRT…QLDV), 104-133 (ENRT…DPNI), 137-166 (YGNT…DIEV), and 170-199 (AGHT…NANA). The segment at 216-258 (KISKNSQNSNPEGTSEGTPDEAAPLAERTPDTAESLVERTPDE) is disordered. Residues 218-232 (SKNSQNSNPEGTSEG) are compositionally biased toward polar residues. Residues 243–258 (RTPDTAESLVERTPDE) are compositionally biased toward basic and acidic residues.

This Homo sapiens (Human) protein is Putative ankyrin repeat domain-containing protein 30B-like (ANKRD30BL).